The chain runs to 714 residues: Fatty acid oxidation complex subunit alpha (714 aa).

The enoyl-CoA hydratase stretch occupies residues 1–190 (MEMTSAFTLN…KLGLVDDVVP (190 aa)). The interval 306–714 (APLNSVGILG…FWKTTATDLQ (409 aa)) is 3-hydroxyacyl-CoA dehydrogenase.

In the N-terminal section; belongs to the enoyl-CoA hydratase/isomerase family. The protein in the central section; belongs to the 3-hydroxyacyl-CoA dehydrogenase family. Heterotetramer of two alpha chains (FadJ) and two beta chains (FadI).

It localises to the cytoplasm. The catalysed reaction is a (3S)-3-hydroxyacyl-CoA = a (2E)-enoyl-CoA + H2O. The enzyme catalyses a 4-saturated-(3S)-3-hydroxyacyl-CoA = a (3E)-enoyl-CoA + H2O. It carries out the reaction a (3S)-3-hydroxyacyl-CoA + NAD(+) = a 3-oxoacyl-CoA + NADH + H(+). It catalyses the reaction (3S)-3-hydroxybutanoyl-CoA = (3R)-3-hydroxybutanoyl-CoA. Its pathway is lipid metabolism; fatty acid beta-oxidation. Its function is as follows. Catalyzes the formation of a hydroxyacyl-CoA by addition of water on enoyl-CoA. Also exhibits 3-hydroxyacyl-CoA epimerase and 3-hydroxyacyl-CoA dehydrogenase activities. The chain is Fatty acid oxidation complex subunit alpha from Escherichia coli O8 (strain IAI1).